Here is a 185-residue protein sequence, read N- to C-terminus: uncharacterized protein (185 aa).

This is an uncharacterized protein from Acanthamoeba polyphaga (Amoeba).